A 344-amino-acid chain; its full sequence is Dihydroorotase (344 aa).

Zn(2+) is bound by residues histidine 13 and histidine 15. Substrate-binding positions include 15 to 17 and asparagine 41; that span reads HLR. Zn(2+) is bound by residues lysine 98, histidine 135, and histidine 173. The residue at position 98 (lysine 98) is an N6-carboxylysine. Histidine 135 provides a ligand contact to substrate. Position 218 (leucine 218) interacts with substrate. A Zn(2+)-binding site is contributed by aspartate 247. Aspartate 247 is an active-site residue. Substrate-binding residues include histidine 251 and alanine 263.

It belongs to the metallo-dependent hydrolases superfamily. DHOase family. Class II DHOase subfamily. Homodimer. Zn(2+) serves as cofactor.

It carries out the reaction (S)-dihydroorotate + H2O = N-carbamoyl-L-aspartate + H(+). It functions in the pathway pyrimidine metabolism; UMP biosynthesis via de novo pathway; (S)-dihydroorotate from bicarbonate: step 3/3. Functionally, catalyzes the reversible cyclization of carbamoyl aspartate to dihydroorotate. The protein is Dihydroorotase of Neisseria gonorrhoeae (strain ATCC 700825 / FA 1090).